We begin with the raw amino-acid sequence, 350 residues long: Glucose-6-phosphate 3-dehydrogenase (350 aa).

Belongs to the Gfo/Idh/MocA family.

The enzyme catalyses D-glucose 6-phosphate + NAD(+) = 3-dehydro-D-glucose 6-phosphate + NADH + H(+). Its pathway is antibiotic biosynthesis; kanosamine biosynthesis. Involved in the biosynthesis of kanosamine (3-amino-3-deoxy-D-glucose), which is known to have antibiotic and antifungal properties, and to be a precursor of the antibiotic neotrehalosadiamine (3,3'-diamino-3,3'-dideoxy-alpha,beta-trehalose (NTD)). Catalyzes the oxidation of glucose 6-phosphate to 3-oxo-D-glucose 6-phosphate. It can only use NAD. In Bacillus subtilis (strain 168), this protein is Glucose-6-phosphate 3-dehydrogenase (ntdC).